Here is a 465-residue protein sequence, read N- to C-terminus: Uronate isomerase (465 aa).

The protein belongs to the metallo-dependent hydrolases superfamily. Uronate isomerase family.

It carries out the reaction D-glucuronate = D-fructuronate. The enzyme catalyses aldehydo-D-galacturonate = keto-D-tagaturonate. It functions in the pathway carbohydrate metabolism; pentose and glucuronate interconversion. The chain is Uronate isomerase from Streptococcus equi subsp. zooepidemicus (strain MGCS10565).